A 180-amino-acid chain; its full sequence is Large ribosomal subunit protein uL5 (180 aa).

It belongs to the universal ribosomal protein uL5 family. As to quaternary structure, forms a bridge to the 30S subunit in the 70S ribosome. Part of the 50S ribosomal subunit; part of the 5S rRNA/L5/L18/L25 (CTC) subcomplex. Is known to contact the 5S rRNA, 23S rRNA and the P site tRNA.

This is one of the proteins that bind and probably mediate the attachment of the 5S RNA into the large ribosomal subunit, where it forms part of the central protuberance. In the 70S ribosome it contacts protein S13 of the 30S subunit (bridge B1b), connecting the 2 subunits; this bridge is implicated in subunit movement. Contacts the P site tRNA; the 5S rRNA and some of its associated proteins might help stabilize positioning of ribosome-bound tRNAs. The sequence is that of Large ribosomal subunit protein uL5 (rplE) from Deinococcus radiodurans (strain ATCC 13939 / DSM 20539 / JCM 16871 / CCUG 27074 / LMG 4051 / NBRC 15346 / NCIMB 9279 / VKM B-1422 / R1).